The following is a 617-amino-acid chain: tRNA uridine 5-carboxymethylaminomethyl modification enzyme MnmG (617 aa).

Residues 9-14, valine 120, and threonine 175 contribute to the FAD site; that span reads GAGHAG. Position 267–281 (267–281) interacts with NAD(+); it reads GPRYCPSIEDKVVRF. Position 364 (glutamine 364) interacts with FAD.

The protein belongs to the MnmG family. As to quaternary structure, homodimer. Heterotetramer of two MnmE and two MnmG subunits. Requires FAD as cofactor.

Its subcellular location is the cytoplasm. In terms of biological role, NAD-binding protein involved in the addition of a carboxymethylaminomethyl (cmnm) group at the wobble position (U34) of certain tRNAs, forming tRNA-cmnm(5)s(2)U34. The protein is tRNA uridine 5-carboxymethylaminomethyl modification enzyme MnmG of Onion yellows phytoplasma (strain OY-M).